Here is a 379-residue protein sequence, read N- to C-terminus: Oxysterol-binding protein-related protein 4C (379 aa).

Belongs to the OSBP family. Expressed in flowers.

Its function is as follows. May be involved in the transport of sterols. The protein is Oxysterol-binding protein-related protein 4C (ORP4C) of Arabidopsis thaliana (Mouse-ear cress).